Consider the following 539-residue polypeptide: uncharacterized protein (539 aa).

2 consecutive ABC transporter domains span residues 8 to 265 and 307 to 537; these read VRIT…SRAL and IELD…IGDM. 339–346 lines the ATP pocket; it reads GDNGSGKS.

The protein belongs to the ABC transporter superfamily.

It localises to the mitochondrion. This is an uncharacterized protein from Saccharomyces cerevisiae (strain ATCC 204508 / S288c) (Baker's yeast).